The chain runs to 198 residues: ATP-dependent Clp protease proteolytic subunit (198 aa).

The Nucleophile role is filled by S103. H128 is a catalytic residue.

It belongs to the peptidase S14 family. As to quaternary structure, fourteen ClpP subunits assemble into 2 heptameric rings which stack back to back to give a disk-like structure with a central cavity, resembling the structure of eukaryotic proteasomes.

The protein resides in the cytoplasm. It catalyses the reaction Hydrolysis of proteins to small peptides in the presence of ATP and magnesium. alpha-casein is the usual test substrate. In the absence of ATP, only oligopeptides shorter than five residues are hydrolyzed (such as succinyl-Leu-Tyr-|-NHMec, and Leu-Tyr-Leu-|-Tyr-Trp, in which cleavage of the -Tyr-|-Leu- and -Tyr-|-Trp bonds also occurs).. Cleaves peptides in various proteins in a process that requires ATP hydrolysis. Has a chymotrypsin-like activity. Plays a major role in the degradation of misfolded proteins. This is ATP-dependent Clp protease proteolytic subunit from Vesicomyosocius okutanii subsp. Calyptogena okutanii (strain HA).